Here is a 387-residue protein sequence, read N- to C-terminus: Succinyl-diaminopimelate desuccinylase (387 aa).

Zn(2+) is bound at residue His75. The active site involves Asp77. Asp108 provides a ligand contact to Zn(2+). Residue Glu139 is the Proton acceptor of the active site. 3 residues coordinate Zn(2+): Glu140, Glu168, and His357.

It belongs to the peptidase M20A family. DapE subfamily. In terms of assembly, homodimer. The cofactor is Zn(2+). Requires Co(2+) as cofactor.

It catalyses the reaction N-succinyl-(2S,6S)-2,6-diaminopimelate + H2O = (2S,6S)-2,6-diaminopimelate + succinate. It participates in amino-acid biosynthesis; L-lysine biosynthesis via DAP pathway; LL-2,6-diaminopimelate from (S)-tetrahydrodipicolinate (succinylase route): step 3/3. In terms of biological role, catalyzes the hydrolysis of N-succinyl-L,L-diaminopimelic acid (SDAP), forming succinate and LL-2,6-diaminopimelate (DAP), an intermediate involved in the bacterial biosynthesis of lysine and meso-diaminopimelic acid, an essential component of bacterial cell walls. This Caulobacter sp. (strain K31) protein is Succinyl-diaminopimelate desuccinylase.